The following is a 603-amino-acid chain: MKEALTSLFEKVTKLPTTSGCYKMLNENKKILYIGKAKNLRSRIKSYFLEKKSHKIKILMKNVKSIEVITTNSEYEALLLECNLIKTHKPDYNVKLKDGKGYPMIRITHEKYPRILKTRKIINDQSEYFGPFTNVKKLDQVLDFINKTFKIRKCKKKSNAPCLYYHMGQCLGVCYKENLEKEYQIEVNKAKSILNGNISEILSQIDIKLKLAVQKEDFETAIKLKEMKSSLIEINQIQIVTKANNLNIDYVYVHPGENVNTIIVLKYRDGKLVERDANFDESICKKDELVLQFLIQYYTSINMIVPDKIHIFLKDVDTKNVEKLINEIKNTKTEIIYKETKEILKIMEMAISNAKLSLREYENKSNKALESLKIFLEMDKLPKIIEGFDIAHLKGQETVASMVTFKMGIPFKENYKLYKLNSLLKGEIDDFRAIKEAILRRYSEIINKKLELPNLILIDGGKGQLSAAFSILKSLKIEDKVKVCSLAKKHETIFLITNKKGINLPQGHPALRILQNVRDEAHRKANGFNKKRREKITLLYKKIDGVGEKTAQKILKLIGTYKDILPLSENEISEKIKVNIKLAKRIKEFAIKENSIKNIDNDK.

Residues 17-94 (TTSGCYKMLN…IKTHKPDYNV (78 aa)) form the GIY-YIG domain. The UVR domain occupies 199–234 (SEILSQIDIKLKLAVQKEDFETAIKLKEMKSSLIEI).

It belongs to the UvrC family. As to quaternary structure, interacts with UvrB in an incision complex.

The protein resides in the cytoplasm. Functionally, the UvrABC repair system catalyzes the recognition and processing of DNA lesions. UvrC both incises the 5' and 3' sides of the lesion. The N-terminal half is responsible for the 3' incision and the C-terminal half is responsible for the 5' incision. The chain is UvrABC system protein C from Borrelia garinii subsp. bavariensis (strain ATCC BAA-2496 / DSM 23469 / PBi) (Borreliella bavariensis).